The primary structure comprises 711 residues: Ribosomal RNA large subunit methyltransferase K/L (711 aa).

Residues 42 to 153 form the THUMP domain; sequence DAQRAVLWSR…KGRATISVDL (112 aa).

This sequence belongs to the methyltransferase superfamily. RlmKL family.

Its subcellular location is the cytoplasm. It carries out the reaction guanosine(2445) in 23S rRNA + S-adenosyl-L-methionine = N(2)-methylguanosine(2445) in 23S rRNA + S-adenosyl-L-homocysteine + H(+). The enzyme catalyses guanosine(2069) in 23S rRNA + S-adenosyl-L-methionine = N(2)-methylguanosine(2069) in 23S rRNA + S-adenosyl-L-homocysteine + H(+). Functionally, specifically methylates the guanine in position 2445 (m2G2445) and the guanine in position 2069 (m7G2069) of 23S rRNA. This chain is Ribosomal RNA large subunit methyltransferase K/L, found in Xanthomonas oryzae pv. oryzae (strain KACC10331 / KXO85).